Reading from the N-terminus, the 196-residue chain is Thymidine kinase (196 aa).

Residue 17–24 (GPMFAGKT) coordinates ATP. Catalysis depends on glutamate 92, which acts as the Proton acceptor. Residue phenylalanine 121 participates in substrate binding. Positions 146 and 149 each coordinate Zn(2+). A substrate-binding site is contributed by 166–170 (LILAG). Zn(2+)-binding residues include cysteine 179 and cysteine 182.

The protein belongs to the thymidine kinase family.

The catalysed reaction is thymidine + ATP = dTMP + ADP + H(+). Its function is as follows. Phosphorylates thymidine. ASFV replicates in the cytoplasm of infected cells and contains genes encoding a number of enzymes needed for DNA synthesis, including thymidine kinase. Important for growth in swine macrophages in vitro and is a virus virulence factor in swine. The protein is Thymidine kinase of African swine fever virus (strain Badajoz 1971 Vero-adapted) (Ba71V).